Reading from the N-terminus, the 223-residue chain is MAKVNAFSKKIGWIELITGPMFAGKTAELIRRLHRLEYADVKYLVFKPKIDTRSIRNIQSRTGTSLPSVEVESAPEILNYIMSNSFNDETKVIGIDEVQFFDDRICEVANILAENGFVVIISGLDKNFKGEPFGPIAKLFTYADKITKLTAICNECGAEATHSLRKIDGKHADYNDDIVKIGCQEFYSAVCRHHHKVPNRPYLNSNSEEFIKFFKNKKRNKNI.

Residues 19–26 (GPMFAGKT) and 96–99 (DEVQ) contribute to the ATP site. E97 acts as the Proton acceptor in catalysis. Zn(2+) contacts are provided by C153, C156, C191, and H194.

Belongs to the thymidine kinase family. As to quaternary structure, homotetramer.

It is found in the cytoplasm. It carries out the reaction thymidine + ATP = dTMP + ADP + H(+). The chain is Thymidine kinase from Ureaplasma parvum serovar 3 (strain ATCC 27815 / 27 / NCTC 11736).